The sequence spans 956 residues: Thrombospondin-3 (956 aa).

Positions 1–21 (MEKPELWGVLALLLLCSYTCG) are cleaved as a signal peptide. Positions 22–193 (SQDLQVIDLL…VESMKIILGG (172 aa)) constitute a Laminin G-like domain. 21 cysteine pairs are disulfide-bonded: C278-C289, C283-C300, C303-C314, C320-C332, C326-C341, C344-C368, C374-C388, C382-C397, C400-C412, C418-C432, C426-C442, C444-C455, C471-C478, C483-C503, C519-C539, C542-C562, C578-C598, C601-C621, C639-C659, C679-C699, and C715-C936. N310 is a glycosylation site (N-linked (GlcNAc...) asparagine). Residues 316 to 354 (DINECAHADPCFPGSSCINTMPGFHCEACPPGYKGTRVS) enclose the EGF-like 1; calcium-binding domain. The EGF-like 2; calcium-binding domain occupies 370–410 (DIDECNDGNNGGCDPNSICTNTVGSFKCGPCRLGFLGNQSQ). N407 carries N-linked (GlcNAc...) asparagine glycosylation. The EGF-like 3 domain maps to 414–456 (PARTCHSPAHSPCHIHAHCLFERNGAVSCQCNVGWAGNGNVCG). TSP type-3 repeat units follow at residues 457–491 (PDTD…NSGQ), 492–527 (EDAD…NKDQ), 528–550 (QNSD…NNDQ), 551–586 (KDTD…NPLQ), 587–609 (TDRD…NPTQ), 610–647 (TDAD…NSSQ), 648–687 (LDSD…NPNQ), and 688–723 (KDSD…EVTL). Disordered stretches follow at residues 518–537 (NCRL…SFGD) and 546–699 (PNND…GDVC). Acidic residues predominate over residues 555 to 568 (GNGEGDACDNDVDG). Over residues 612–628 (ADSDLVGDVCDTNEDSD) the composition is skewed to acidic residues. N644 carries an N-linked (GlcNAc...) asparagine glycan. Over residues 650–667 (SDNDGLGDECDGDDDNDG) the composition is skewed to acidic residues. A TSP C-terminal domain is found at 727 to 941 (RAYQTVILDP…LQYRCNDTVP (215 aa)). N-linked (GlcNAc...) asparagine glycosylation occurs at N937.

This sequence belongs to the thrombospondin family. In terms of assembly, oligomer; disulfide-linked. Brain, lung and cartilage.

Functionally, adhesive glycoprotein that mediates cell-to-cell and cell-to-matrix interactions. Can bind to fibrinogen, fibronectin, laminin and type V collagen. This Mus musculus (Mouse) protein is Thrombospondin-3 (Thbs3).